We begin with the raw amino-acid sequence, 188 residues long: Ribosome maturation factor RimM (188 aa).

The 74-residue stretch at 98–171 folds into the PRC barrel domain; it reads EGEFFQGDLV…RIVIHPPEYV (74 aa).

Belongs to the RimM family. In terms of assembly, binds ribosomal protein uS19.

It is found in the cytoplasm. An accessory protein needed during the final step in the assembly of 30S ribosomal subunit, possibly for assembly of the head region. Essential for efficient processing of 16S rRNA. May be needed both before and after RbfA during the maturation of 16S rRNA. It has affinity for free ribosomal 30S subunits but not for 70S ribosomes. This Myxococcus xanthus (strain DK1622) protein is Ribosome maturation factor RimM.